A 1023-amino-acid polypeptide reads, in one-letter code: Sodium/potassium-transporting ATPase subunit alpha-1 (1023 aa).

The propeptide occupies 1–5 (MGYGA). Residues 1–11 (MGYGAGRDKYE) are compositionally biased toward basic and acidic residues. The interval 1-34 (MGYGAGRDKYEPAATSEHGGKKGKGKGKDRDMEE) is disordered. Residues 6 to 87 (GRDKYEPAAT…NALTPPPTTP (82 aa)) are Cytoplasmic-facing. Position 15 is a phosphothreonine; by PKC (T15). At S16 the chain carries Phosphoserine; by PKC. The interaction with phosphoinositide-3 kinase stretch occupies residues 82 to 84 (PPP). A helical transmembrane segment spans residues 88–108 (EWVKFCRQLFGGFSMLLWIGA). At 109 to 131 (ILCFLAYGIRKASDLEPDNDNLY) the chain is on the extracellular side. The helical transmembrane segment at 132 to 152 (LGVVLSAVVIITGCFSYYQEA) threads the bilayer. At 153-288 (KSSRIMESFK…GGQTPIAVEI (136 aa)) the chain is on the cytoplasmic side. The tract at residues 215–235 (NSSLTGESEPQTRSPDFTNEN) is disordered. Residues 289–308 (GHFIHIITGVAVFLGVSFFI) form a helical membrane-spanning segment. Topologically, residues 309–320 (LSLILHYTWLEA) are extracellular. The chain crosses the membrane as a helical span at residues 321 to 338 (VIFLIGIIVANVPEGLLA). Topologically, residues 339-772 (TVTVCLTLTA…EEGRLIFDNL (434 aa)) are cytoplasmic. D376 serves as the catalytic 4-aspartylphosphate intermediate. K487 serves as a coordination point for ATP. Mg(2+) is bound by residues D717 and D721. The helical transmembrane segment at 773-792 (KKSIAYTLTSNIPEITPFLI) threads the bilayer. Residues 793–802 (FIIADIPLPL) lie on the Extracellular side of the membrane. The helical transmembrane segment at 803-823 (GTVTILCIDLGTDMVPAISLA) threads the bilayer. Over 824 to 843 (YEQAESDIMKRQPRNPKKDK) the chain is Cytoplasmic. Residues 844-866 (LVNERLISMAYGQIGMIQALGGF) form a helical membrane-spanning segment. The Extracellular portion of the chain corresponds to 867 to 918 (FAYFVILAENGFLPSTLLGIRVAWEDRYVNDVEDSYGQQWTYEQRKIVEFTC). Residues 919–938 (HTAFFVSIVVVQWADLIICK) traverse the membrane as a helical segment. Residues 939-951 (TRRNSVFQQGMKN) lie on the Cytoplasmic side of the membrane. S943 is subject to Phosphoserine; by PKA. The chain crosses the membrane as a helical span at residues 952 to 970 (KILIFGLFEETALAAFLSY). The Extracellular segment spans residues 971–985 (CPGMDVALRMYPLKP). Residues 986-1006 (TWWFCAFPYSLLIFIYDEVRK) traverse the membrane as a helical segment. Residues 1007–1023 (LILRRSPGGWVEKETYY) lie on the Cytoplasmic side of the membrane.

It belongs to the cation transport ATPase (P-type) (TC 3.A.3) family. Type IIC subfamily. As to quaternary structure, the sodium/potassium-transporting ATPase is composed of a catalytic alpha subunit, an auxiliary non-catalytic beta subunit and an additional regulatory subunit. As to expression, mainly expressed in kidney. Found in bladder, colon, eye, and testis. Found in low levels in brain, heart, spleen and liver.

The protein localises to the cell membrane. It is found in the sarcolemma. The enzyme catalyses K(+)(out) + Na(+)(in) + ATP + H2O = K(+)(in) + Na(+)(out) + ADP + phosphate + H(+). With respect to regulation, this alpha subunit is resistant to ouabain. Its function is as follows. This is the catalytic component of the active enzyme, which catalyzes the hydrolysis of ATP coupled with the exchange of sodium and potassium ions across the plasma membrane. This action creates the electrochemical gradient of sodium and potassium ions, providing the energy for active transport of various nutrients. In Rhinella marina (Cane toad), this protein is Sodium/potassium-transporting ATPase subunit alpha-1 (ATP1A1).